Here is a 750-residue protein sequence, read N- to C-terminus: Polyribonucleotide nucleotidyltransferase (750 aa).

Positions 523 and 529 each coordinate Mg(2+). One can recognise a KH domain in the interval 589-648 (PRVTSISIPVDKIGEVIGPKGKMINSITEETGAEITIEDDGTIYVGAADGPSAEAAIDKI). Residues 660–729 (GERFLGTVVK…SRGKISLVVV (70 aa)) enclose the S1 motif domain.

Belongs to the polyribonucleotide nucleotidyltransferase family. Mg(2+) is required as a cofactor.

The protein localises to the cytoplasm. The enzyme catalyses RNA(n+1) + phosphate = RNA(n) + a ribonucleoside 5'-diphosphate. Functionally, involved in mRNA degradation. Catalyzes the phosphorolysis of single-stranded polyribonucleotides processively in the 3'- to 5'-direction. This is Polyribonucleotide nucleotidyltransferase from Saccharopolyspora erythraea (strain ATCC 11635 / DSM 40517 / JCM 4748 / NBRC 13426 / NCIMB 8594 / NRRL 2338).